We begin with the raw amino-acid sequence, 710 residues long: MSVPSSLSQSAINANSHGGPALSLPLPLHAAHNQLLNAKLQATAVGPKDLRSAMGEGGGPEPGPANAKWLKEGQNQLRRAATAHRDQNRNVTLTLAEEASQEPEMAPLGPKGLIHLYSELELSAHNAANRGLRGPGLIISTQEQGPDEGEEKAAGEAEEEEEDDDDEEEEEDLSSPPGLPEPLESVEAPPRPQALTDGPREHSKSASLLFGMRNSAASDEDSSWATLSQGSPSYGSPEDTDSFWNPNAFETDSDLPAGWMRVQDTSGTYYWHIPTGTTQWEPPGRASPSQGSSPQEESQLTWTGFAHGEGFEDGEFWKDEPSDEAPMELGLKEPEEGTLTFPAQSLSPEPLPQEEEKLPPRNTNPGIKCFAVRSLGWVEMTEEELAPGRSSVAVNNCIRQLSYHKNNLHDPMSGGWGEGKDLLLQLEDETLKLVEPQSQALLHAQPIISIRVWGVGRDSGRERDFAYVARDKLTQMLKCHVFRCEAPAKNIATSLHEICSKIMAERRNARCLVNGLSLDHSKLVDVPFQVEFPAPKNELVQKFQVYYLGNVPVAKPVGVDVINGALESVLSSSSREQWTPSHVSVAPATLTILHQQTEAVLGECRVRFLSFLAVGRDVHTFAFIMAAGPASFCCHMFWCEPNAASLSEAVQAACMLRYQKCLDARSQASTSCLPAPPAESVARRVGWTVRRGVQSLWGSLKPKRLGAHTP.

Residues 1-15 (MSVPSSLSQSAINAN) are compositionally biased toward polar residues. Disordered regions lie at residues 1-24 (MSVP…ALSL), 131-254 (GLRG…TDSD), 276-299 (GTTQ…EESQ), and 340-365 (TFPA…NTNP). The span at 145–173 (GPDEGEEKAAGEAEEEEEDDDDEEEEEDL) shows a compositional bias: acidic residues. Lys204 carries the N6-acetyllysine modification. Polar residues predominate over residues 223-234 (SWATLSQGSPSY). Residues 253–285 (SDLPAGWMRVQDTSGTYYWHIPTGTTQWEPPGR) form the WW domain. A compositionally biased stretch (low complexity) spans 287–299 (SPSQGSSPQEESQ). The region spanning 370 to 509 (FAVRSLGWVE…SKIMAERRNA (140 aa)) is the PID 1 domain. Ser459 is modified (phosphoserine; by PKC). A Phosphoserine modification is found at Ser517. The PID 2 domain maps to 542–699 (KFQVYYLGNV…RRGVQSLWGS (158 aa)). Phosphotyrosine; by ABL1 is present on Tyr547. Ser610 carries the phosphoserine; by SGK1 modification. An N6-acetyllysine modification is found at Lys701.

Component of a complex, at least composed of APBB1, RASD1/DEXRAS1 and APP. Interacts (via PID domain 2) with APP (with the intracellular domain of the amyloid-beta precursor protein). Interacts (via PID domain 2) with RASD1/DEXRAS1; impairs the transcription activation activity. Interacts (via PID domain 1) with KAT5/TIP60. Interacts (via the WW domain) with the proline-rich region of APBB1IP. Interacts with TSHZ1 and TSHZ2. Interacts (via the WW domain) with histone H2AX (when phosphorylated on 'Tyr-142') and the proline-rich region of ENAH. Interacts with MAPK8. Interacts (via PID domain 1) with TSHZ3 (via homeobox domain). Interacts with SET. Found in a trimeric complex with HDAC1 and TSHZ3; the interaction between HDAC1 and APBB1 is mediated by TSHZ3. Interacts (via WWW domain) with NEK6. Interacts (via WWW domain) with ABL1. Interacts with RNF157. Interacts with ARF6. Post-translationally, phosphorylation at Ser-610 by SGK1 promotes its localization to the nucleus. Phosphorylated following nuclear translocation. Phosphorylation at Tyr-547 by ABL1 enhances transcriptional activation activity and reduces the affinity for RASD1/DEXRAS1. Phosphorylated at Ser-459 by PKC upon insulin activation. Acetylation at Lys-204 and Lys-701 by KAT5 promotes its transcription activator activity. In terms of processing, polyubiquitination by RNF157 leads to degradation by the proteasome. Highly expressed in brain; strongly reduced in post-mortem elderly subjects with Alzheimer disease. In terms of tissue distribution, expressed preferentially in the brain.

The protein resides in the cell membrane. Its subcellular location is the cytoplasm. The protein localises to the nucleus. It is found in the cell projection. It localises to the growth cone. The protein resides in the nucleus speckle. Functionally, transcription coregulator that can have both coactivator and corepressor functions. Adapter protein that forms a transcriptionally active complex with the gamma-secretase-derived amyloid precursor protein (APP) intracellular domain. Plays a central role in the response to DNA damage by translocating to the nucleus and inducing apoptosis. May act by specifically recognizing and binding histone H2AX phosphorylated on 'Tyr-142' (H2AXY142ph) at double-strand breaks (DSBs), recruiting other pro-apoptosis factors such as MAPK8/JNK1. Required for histone H4 acetylation at double-strand breaks (DSBs). Its ability to specifically bind modified histones and chromatin modifying enzymes such as KAT5/TIP60, probably explains its transcription activation activity. Functions in association with TSHZ3, SET and HDAC factors as a transcriptional repressor, that inhibits the expression of CASP4. Associates with chromatin in a region surrounding the CASP4 transcriptional start site(s). Involved in hippocampal neurite branching and neuromuscular junction formation, as a result plays a role in spatial memory functioning. Plays a role in the maintenance of lens transparency. May play a role in muscle cell strength. Acts as a molecular adapter that functions in neurite outgrowth by activating the RAC1-ARF6 axis upon insulin treatment. The protein is Amyloid beta precursor protein binding family B member 1 of Homo sapiens (Human).